Consider the following 505-residue polypeptide: MEEFQGHRELDRSWQHNFLYPLIFQEYIYTXAYDNGLNKLILLENGVDQKYSLLTVKRLITRLYQQNHLILSANDSNQNEIFGHKHKKNLYLQMITEGFAVIVEIPFSLLLISSLDGKEKKIVKSPNLQSIHSIFPFLEDKFLYLNYVLDILIPYPAHLEILVQTLRYWLKDASSLHLLRFFFYECRNWTSRITSKESISFLKTRNRRLFLFLYNFYVCEYESFFVILRNQSSYLRSTSFGALLERIHFYGKFKYLVKVKACAVILCFFKEPFPHYVRYQGKALLASKGTSLLMHKWKYYFISFWQCYFSVWSQPRRIYINQLSNYSLDFMGFLSSVRFNSSVIRSQMLENSFLLENIRNKFDPIVPISPLVGSLAKSKFCNVLGHPIGKSVWTDLSDSDIIDRFGRICRNLSHYYSGSSRKKNLYRIKYILRLSCARTLSRKHKSTVRAFLKRLGSEFLEEFFTEEEKVLSLILPRDSSTSGGLYKGRVWYLDIICIHNLVNDQ.

It belongs to the intron maturase 2 family. MatK subfamily.

It localises to the plastid. It is found in the chloroplast. In terms of biological role, usually encoded in the trnK tRNA gene intron. Probably assists in splicing its own and other chloroplast group II introns. In Gomphrena pulchella (Globe amaranth), this protein is Maturase K.